We begin with the raw amino-acid sequence, 448 residues long: Amino-acid acetyltransferase (448 aa).

The N-acetyltransferase domain occupies 295-433; the sequence is EQIRRANIND…KQVLYNYQRR (139 aa).

Belongs to the acetyltransferase family. ArgA subfamily. As to quaternary structure, homohexamer.

It is found in the cytoplasm. The enzyme catalyses L-glutamate + acetyl-CoA = N-acetyl-L-glutamate + CoA + H(+). The protein operates within amino-acid biosynthesis; L-arginine biosynthesis; N(2)-acetyl-L-ornithine from L-glutamate: step 1/4. The sequence is that of Amino-acid acetyltransferase from Photorhabdus laumondii subsp. laumondii (strain DSM 15139 / CIP 105565 / TT01) (Photorhabdus luminescens subsp. laumondii).